The primary structure comprises 258 residues: Snake venom serine proteinase 8 (258 aa).

A signal peptide spans 1 to 18; the sequence is MVLIRVLANLLILQLSYA. The propeptide occupies 19–24; sequence QKSSEL. Residues 25-249 form the Peptidase S1 domain; sequence VIGGDECNIN…YNDWIQSIIA (225 aa). Intrachain disulfides connect Cys-31-Cys-163, Cys-50-Cys-66, Cys-98-Cys-256, Cys-142-Cys-210, Cys-174-Cys-189, and Cys-200-Cys-225. Asn-44 carries an N-linked (GlcNAc...) asparagine glycan. Catalysis depends on charge relay system residues His-65 and Asp-110. Ser-204 serves as the catalytic Charge relay system.

Belongs to the peptidase S1 family. Snake venom subfamily. As to quaternary structure, monomer. As to expression, expressed by the venom gland.

The protein resides in the secreted. In terms of biological role, snake venom serine protease that may act in the hemostasis system of the prey. This is Snake venom serine proteinase 8 from Crotalus adamanteus (Eastern diamondback rattlesnake).